Reading from the N-terminus, the 507-residue chain is Eukaryotic translation initiation factor 4E-binding protein Mextli homolog (507 aa).

Residues 126–163 form a disordered region; it reads RPEGQHDPAPTVGIPPSATSPPTQVTSSVTSPVPSSPQ. Low complexity predominate over residues 140–158; the sequence is PPSATSPPTQVTSSVTSPV. The region spanning 242-307 is the KH domain; the sequence is QLRHEMIIRN…EDIERAKDMI (66 aa). 2 disordered regions span residues 314-360 and 395-424; these read NMSP…DEDI and ARPS…QQEP. Positions 329 to 348 are enriched in polar residues; sequence QYSGMSSENQSIPSQQNTAN. The span at 349 to 360 shows a compositional bias: acidic residues; that stretch reads IDEDDDDDDEDI.

As to quaternary structure, interacts with eukaryotic translation initiation factor ife-3.

The protein resides in the cytoplasm. Functionally, plays a role in promoting translation. This chain is Eukaryotic translation initiation factor 4E-binding protein Mextli homolog, found in Caenorhabditis elegans.